Here is a 330-residue protein sequence, read N- to C-terminus: Methionyl-tRNA formyltransferase (330 aa).

116–119 (SLLP) serves as a coordination point for (6S)-5,6,7,8-tetrahydrofolate.

The protein belongs to the Fmt family.

The catalysed reaction is L-methionyl-tRNA(fMet) + (6R)-10-formyltetrahydrofolate = N-formyl-L-methionyl-tRNA(fMet) + (6S)-5,6,7,8-tetrahydrofolate + H(+). Functionally, attaches a formyl group to the free amino group of methionyl-tRNA(fMet). The formyl group appears to play a dual role in the initiator identity of N-formylmethionyl-tRNA by promoting its recognition by IF2 and preventing the misappropriation of this tRNA by the elongation apparatus. This is Methionyl-tRNA formyltransferase from Nitratidesulfovibrio vulgaris (strain ATCC 29579 / DSM 644 / CCUG 34227 / NCIMB 8303 / VKM B-1760 / Hildenborough) (Desulfovibrio vulgaris).